A 352-amino-acid polypeptide reads, in one-letter code: N-acetyl-gamma-glutamyl-phosphate reductase (352 aa).

Residue Cys-156 is part of the active site.

It belongs to the NAGSA dehydrogenase family. Type 1 subfamily.

The protein resides in the cytoplasm. The enzyme catalyses N-acetyl-L-glutamate 5-semialdehyde + phosphate + NADP(+) = N-acetyl-L-glutamyl 5-phosphate + NADPH + H(+). Its pathway is amino-acid biosynthesis; L-arginine biosynthesis; N(2)-acetyl-L-ornithine from L-glutamate: step 3/4. Functionally, catalyzes the NADPH-dependent reduction of N-acetyl-5-glutamyl phosphate to yield N-acetyl-L-glutamate 5-semialdehyde. The sequence is that of N-acetyl-gamma-glutamyl-phosphate reductase from Rhodospirillum rubrum (strain ATCC 11170 / ATH 1.1.1 / DSM 467 / LMG 4362 / NCIMB 8255 / S1).